We begin with the raw amino-acid sequence, 117 residues long: Transcription elongation factor A protein-like 8 (117 aa).

2 stretches are compositionally biased toward basic and acidic residues: residues 1 to 10 (MQKSCEENEG) and 61 to 75 (FKED…PEEM). The disordered stretch occupies residues 1–75 (MQKSCEENEG…PVRHLDPEEM (75 aa)). Residues 73 to 100 (EEMIRGVDELERLREEIRRVRNKFVMMH) are a coiled coil.

It belongs to the TFS-II family. TFA subfamily.

It localises to the nucleus. May be involved in transcriptional regulation. The polypeptide is Transcription elongation factor A protein-like 8 (TCEAL8) (Homo sapiens (Human)).